A 197-amino-acid polypeptide reads, in one-letter code: Ribonuclease HII (197 aa).

An RNase H type-2 domain is found at 4-197 (IWVCGVDEAG…VRKALESVAS (194 aa)). A divalent metal cation-binding residues include Asp-10, Glu-11, and Asp-106.

The protein belongs to the RNase HII family. The cofactor is Mn(2+). It depends on Mg(2+) as a cofactor.

Its subcellular location is the cytoplasm. The enzyme catalyses Endonucleolytic cleavage to 5'-phosphomonoester.. Endonuclease that specifically degrades the RNA of RNA-DNA hybrids. This chain is Ribonuclease HII, found in Polynucleobacter necessarius subsp. necessarius (strain STIR1).